Here is a 283-residue protein sequence, read N- to C-terminus: 4-diphosphocytidyl-2-C-methyl-D-erythritol kinase (283 aa).

Lys-8 is a catalytic residue. 90–100 serves as a coordination point for ATP; it reads PIGSGLAGGSS. Residue Asp-132 is part of the active site.

The protein belongs to the GHMP kinase family. IspE subfamily.

The catalysed reaction is 4-CDP-2-C-methyl-D-erythritol + ATP = 4-CDP-2-C-methyl-D-erythritol 2-phosphate + ADP + H(+). The protein operates within isoprenoid biosynthesis; isopentenyl diphosphate biosynthesis via DXP pathway; isopentenyl diphosphate from 1-deoxy-D-xylulose 5-phosphate: step 3/6. Catalyzes the phosphorylation of the position 2 hydroxy group of 4-diphosphocytidyl-2C-methyl-D-erythritol. The sequence is that of 4-diphosphocytidyl-2-C-methyl-D-erythritol kinase from Chlamydia muridarum (strain MoPn / Nigg).